The sequence spans 204 residues: Large ribosomal subunit protein bL25 (204 aa).

It belongs to the bacterial ribosomal protein bL25 family. CTC subfamily. As to quaternary structure, part of the 50S ribosomal subunit; part of the 5S rRNA/L5/L18/L25 subcomplex. Contacts the 5S rRNA. Binds to the 5S rRNA independently of L5 and L18.

Functionally, this is one of the proteins that binds to the 5S RNA in the ribosome where it forms part of the central protuberance. This is Large ribosomal subunit protein bL25 from Pseudoalteromonas translucida (strain TAC 125).